We begin with the raw amino-acid sequence, 379 residues long: L-demethylnoviosyl transferase (379 aa).

It belongs to the glycosyltransferase 28 family.

The enzyme catalyses dTDP-4-O-demethyl-beta-L-noviose + novobiocic acid = desmethyldescarbamoylnovobiocin + dTDP + H(+). Its pathway is antibiotic biosynthesis; novobiocin biosynthesis. Its activity is regulated as follows. Inhibited by TDP-L-rhamnose, the sugar donor that most closely structurally resembles the natural substrate dTDP-beta-L-noviose. Its function is as follows. Catalyzes the transfer of L-noviose from dTDP-4-O-demethyl-beta-L-noviose to the phenolic oxygen of novobiocic acid, creating the full ABC ring system in the novobiocin biosynthesis pathway. Novobiocin is an aminocoumarin family antibiotic that targets bacterial DNA gyrases. Also shows activity with variant coumarin aglycones, suggesting it may be a promiscuous catalyst for noviosylation of a range of planar scaffolds. Does not show activity with TDP-L-rhamnose. In Streptomyces niveus (Streptomyces spheroides), this protein is L-demethylnoviosyl transferase (novM).